The chain runs to 328 residues: MGTVTTADPHASFLADKGGKVFVAGHRGLVGSAILRHLVSLGFTNVVVRTHAELDLTRQSDVEAFFAAELPRYVVLAAAKVGGIHANSTFPADFIAANLQIQTNVVDAALKCGSVRKLLFLGSSCIYPKFAPQPIPENSLLSGPLEPTNEWYAVAKIAGIKMCQAYRIQHGFDAISAMPTNLYGPQDNFHPENSHVLPALIRRFHEAKASNAAEVVVWGTGSPLREFLHVDDLADAVIFLMDHYSGLEHVNVGSGSEVTIKELAELVKEVVGFQGKLVWDSSKPDGTPRKLMDSSKIQEMGWKPKVPLKEGLVETYKWYVENVISAKK.

25–31 (GHRGLVG) lines the NADP(+) pocket. Y152 serves as the catalytic Proton donor/acceptor. NADP(+) contacts are provided by residues K156, 179–182 (PTNL), and H195. R203, W218, R225, and D285 together coordinate substrate.

Belongs to the NAD(P)-dependent epimerase/dehydratase family. Fucose synthase subfamily. As to quaternary structure, homodimer.

The enzyme catalyses GDP-beta-L-fucose + NADP(+) = GDP-4-dehydro-alpha-D-rhamnose + NADPH + H(+). Its pathway is nucleotide-sugar biosynthesis; GDP-L-fucose biosynthesis via de novo pathway; GDP-L-fucose from GDP-alpha-D-mannose: step 2/2. In terms of biological role, catalyzes the two-step NADP-dependent conversion of GDP-4-dehydro-6-deoxy-D-mannose to GDP-fucose, involving an epimerase and a reductase reaction. This chain is Probable GDP-L-fucose synthase 1, found in Oryza sativa subsp. japonica (Rice).